The sequence spans 303 residues: tRNA dimethylallyltransferase (303 aa).

12 to 19 (GPTGVGKT) provides a ligand contact to ATP. Residue 14–19 (TGVGKT) participates in substrate binding. The segment at 37 to 40 (DSAQ) is interaction with substrate tRNA.

It belongs to the IPP transferase family. As to quaternary structure, monomer. Mg(2+) is required as a cofactor.

The enzyme catalyses adenosine(37) in tRNA + dimethylallyl diphosphate = N(6)-dimethylallyladenosine(37) in tRNA + diphosphate. Its function is as follows. Catalyzes the transfer of a dimethylallyl group onto the adenine at position 37 in tRNAs that read codons beginning with uridine, leading to the formation of N6-(dimethylallyl)adenosine (i(6)A). This chain is tRNA dimethylallyltransferase, found in Fusobacterium nucleatum subsp. nucleatum (strain ATCC 25586 / DSM 15643 / BCRC 10681 / CIP 101130 / JCM 8532 / KCTC 2640 / LMG 13131 / VPI 4355).